We begin with the raw amino-acid sequence, 102 residues long: Integration host factor subunit alpha (102 aa).

Residues 49–70 (FGNFQLRTKPQRPGRNPKTGEE) are disordered.

It belongs to the bacterial histone-like protein family. In terms of assembly, heterodimer of an alpha and a beta chain.

Its function is as follows. This protein is one of the two subunits of integration host factor, a specific DNA-binding protein that functions in genetic recombination as well as in transcriptional and translational control. This Nitrosomonas europaea (strain ATCC 19718 / CIP 103999 / KCTC 2705 / NBRC 14298) protein is Integration host factor subunit alpha.